Here is a 135-residue protein sequence, read N- to C-terminus: D-ribose pyranase (135 aa).

Catalysis depends on His-20, which acts as the Proton donor. Residues Asp-28, His-102, and 124-126 contribute to the substrate site; that span reads YAN.

The protein belongs to the RbsD / FucU family. RbsD subfamily. As to quaternary structure, homodecamer.

Its subcellular location is the cytoplasm. It catalyses the reaction beta-D-ribopyranose = beta-D-ribofuranose. It functions in the pathway carbohydrate metabolism; D-ribose degradation; D-ribose 5-phosphate from beta-D-ribopyranose: step 1/2. Functionally, catalyzes the interconversion of beta-pyran and beta-furan forms of D-ribose. In Rhodopirellula baltica (strain DSM 10527 / NCIMB 13988 / SH1), this protein is D-ribose pyranase.